The sequence spans 290 residues: 4-hydroxy-tetrahydrodipicolinate synthase (290 aa).

Pyruvate is bound at residue T44. Y132 serves as the catalytic Proton donor/acceptor. Catalysis depends on K160, which acts as the Schiff-base intermediate with substrate. I202 contributes to the pyruvate binding site.

The protein belongs to the DapA family. As to quaternary structure, homotetramer; dimer of dimers.

Its subcellular location is the cytoplasm. The enzyme catalyses L-aspartate 4-semialdehyde + pyruvate = (2S,4S)-4-hydroxy-2,3,4,5-tetrahydrodipicolinate + H2O + H(+). Its pathway is amino-acid biosynthesis; L-lysine biosynthesis via DAP pathway; (S)-tetrahydrodipicolinate from L-aspartate: step 3/4. Its function is as follows. Catalyzes the condensation of (S)-aspartate-beta-semialdehyde [(S)-ASA] and pyruvate to 4-hydroxy-tetrahydrodipicolinate (HTPA). The protein is 4-hydroxy-tetrahydrodipicolinate synthase of Ruegeria pomeroyi (strain ATCC 700808 / DSM 15171 / DSS-3) (Silicibacter pomeroyi).